The sequence spans 393 residues: MSRQNYIFTSESVSEGHPDKVCDRISDAVLDAFLTEEPEARVACETFATTNRVVIGGEVGLSDQAKLREYMGRIDQIARDCIKDIGYEQDKFHHETVEITNLLHEQSAHIAQGVNAAEGKDEGAGDQGIMFGYATTETPALMPAPIQYSHAILRRLAEVRKNGTEPALGPDAKSQLSVIYRDGMPVGVSSLVLSTQHLDPDLTSADIRAIVEPYIREVLPEGWLSADTVWHVNPTGKFVIGGPDGDAGLTGRKIIVDTYGGAAPHGGGAFSGKDPTKVDRSAAYAARYLAKNVVAAGLADKCTIQLSYAIGVSKPLSIYADTHGTGDIAPAAIEKAIDTVMDLTPRGIRTHLGLNKPIYERTAAYGHFGREPEADGGFSWERTDLAEALKKAV.

H17 contacts ATP. D19 provides a ligand contact to Mg(2+). A K(+)-binding site is contributed by E45. L-methionine-binding residues include E58 and Q106. The interval 106-116 (QSAHIAQGVNA) is flexible loop. ATP is bound by residues 171 to 173 (DAK), 237 to 238 (KF), D246, 252 to 253 (RK), A269, and K273. L-methionine is bound at residue D246. An L-methionine-binding site is contributed by K277.

This sequence belongs to the AdoMet synthase family. In terms of assembly, homotetramer; dimer of dimers. Requires Mg(2+) as cofactor. The cofactor is K(+).

It is found in the cytoplasm. It carries out the reaction L-methionine + ATP + H2O = S-adenosyl-L-methionine + phosphate + diphosphate. The protein operates within amino-acid biosynthesis; S-adenosyl-L-methionine biosynthesis; S-adenosyl-L-methionine from L-methionine: step 1/1. Catalyzes the formation of S-adenosylmethionine (AdoMet) from methionine and ATP. The overall synthetic reaction is composed of two sequential steps, AdoMet formation and the subsequent tripolyphosphate hydrolysis which occurs prior to release of AdoMet from the enzyme. The sequence is that of S-adenosylmethionine synthase from Ruegeria pomeroyi (strain ATCC 700808 / DSM 15171 / DSS-3) (Silicibacter pomeroyi).